Reading from the N-terminus, the 105-residue chain is UPF0166 protein aq_450 (105 aa).

It belongs to the UPF0166 family.

This is UPF0166 protein aq_450 from Aquifex aeolicus (strain VF5).